Consider the following 260-residue polypeptide: Malonyl-[acyl-carrier protein] O-methyltransferase (260 aa).

The protein belongs to the methyltransferase superfamily.

The catalysed reaction is malonyl-[ACP] + S-adenosyl-L-methionine = malonyl-[ACP] methyl ester + S-adenosyl-L-homocysteine. Its pathway is cofactor biosynthesis; biotin biosynthesis. Functionally, converts the free carboxyl group of a malonyl-thioester to its methyl ester by transfer of a methyl group from S-adenosyl-L-methionine (SAM). It allows to synthesize pimeloyl-ACP via the fatty acid synthetic pathway. This is Malonyl-[acyl-carrier protein] O-methyltransferase from Herminiimonas arsenicoxydans.